Reading from the N-terminus, the 371-residue chain is Bifunctional enzyme IspD/IspF (371 aa).

Residues 1–210 (MSEMSLIMLA…LNLPTPSFEI (210 aa)) form a 2-C-methyl-D-erythritol 4-phosphate cytidylyltransferase region. Residues 211–371 (FTGNGFDVHE…NLKYFDWTRL (161 aa)) are 2-C-methyl-D-erythritol 2,4-cyclodiphosphate synthase. A divalent metal cation contacts are provided by D217 and H219. 4-CDP-2-C-methyl-D-erythritol 2-phosphate is bound by residues 217 to 219 (DVH) and 243 to 244 (HS). H251 is a binding site for a divalent metal cation. Residues 265 to 267 (DIG), 270 to 274 (YPDTD), 341 to 344 (TTTE), F348, and R351 each bind 4-CDP-2-C-methyl-D-erythritol 2-phosphate.

It in the N-terminal section; belongs to the IspD/TarI cytidylyltransferase family. IspD subfamily. The protein in the C-terminal section; belongs to the IspF family. The cofactor is a divalent metal cation.

It carries out the reaction 2-C-methyl-D-erythritol 4-phosphate + CTP + H(+) = 4-CDP-2-C-methyl-D-erythritol + diphosphate. The enzyme catalyses 4-CDP-2-C-methyl-D-erythritol 2-phosphate = 2-C-methyl-D-erythritol 2,4-cyclic diphosphate + CMP. It functions in the pathway isoprenoid biosynthesis; isopentenyl diphosphate biosynthesis via DXP pathway; isopentenyl diphosphate from 1-deoxy-D-xylulose 5-phosphate: step 2/6. It participates in isoprenoid biosynthesis; isopentenyl diphosphate biosynthesis via DXP pathway; isopentenyl diphosphate from 1-deoxy-D-xylulose 5-phosphate: step 4/6. Bifunctional enzyme that catalyzes the formation of 4-diphosphocytidyl-2-C-methyl-D-erythritol from CTP and 2-C-methyl-D-erythritol 4-phosphate (MEP) (IspD), and catalyzes the conversion of 4-diphosphocytidyl-2-C-methyl-D-erythritol 2-phosphate (CDP-ME2P) to 2-C-methyl-D-erythritol 2,4-cyclodiphosphate (ME-CPP) with a corresponding release of cytidine 5-monophosphate (CMP) (IspF). In Campylobacter jejuni (strain RM1221), this protein is Bifunctional enzyme IspD/IspF.